Here is a 281-residue protein sequence, read N- to C-terminus: Phosphate import ATP-binding protein PstB 1 (281 aa).

The tract at residues 1–34 is disordered; sequence MTENTAETADESSDGGVTATTGAATTTPTTPPEP. A compositionally biased stretch (low complexity) spans 15–28; the sequence is GGVTATTGAATTTP. Positions 36–276 constitute an ABC transporter domain; that stretch reads IRARDLDVFY…PEHQRVEEYI (241 aa). ATP is bound at residue 68 to 75; it reads GPSGCGKS.

Belongs to the ABC transporter superfamily. Phosphate importer (TC 3.A.1.7) family. The complex is composed of two ATP-binding proteins (PstB), two transmembrane proteins (PstC and PstA) and a solute-binding protein (PstS).

It is found in the cell membrane. The enzyme catalyses phosphate(out) + ATP + H2O = ADP + 2 phosphate(in) + H(+). Its function is as follows. Part of the ABC transporter complex PstSACB involved in phosphate import. Responsible for energy coupling to the transport system. This Halobacterium salinarum (strain ATCC 700922 / JCM 11081 / NRC-1) (Halobacterium halobium) protein is Phosphate import ATP-binding protein PstB 1.